Reading from the N-terminus, the 910-residue chain is Valine--tRNA ligase (910 aa).

Residues 45–55 (PNVTGSLHMGH) carry the 'HIGH' region motif. A 'KMSKS' region motif is present at residues 554-558 (KMSKS). Position 557 (Lys557) interacts with ATP. Positions 842 to 910 (DLQAEAARLA…TAESRIRDAS (69 aa)) form a coiled coil.

This sequence belongs to the class-I aminoacyl-tRNA synthetase family. ValS type 1 subfamily. In terms of assembly, monomer.

The protein localises to the cytoplasm. It catalyses the reaction tRNA(Val) + L-valine + ATP = L-valyl-tRNA(Val) + AMP + diphosphate. Catalyzes the attachment of valine to tRNA(Val). As ValRS can inadvertently accommodate and process structurally similar amino acids such as threonine, to avoid such errors, it has a 'posttransfer' editing activity that hydrolyzes mischarged Thr-tRNA(Val) in a tRNA-dependent manner. This Brucella melitensis biotype 1 (strain ATCC 23456 / CCUG 17765 / NCTC 10094 / 16M) protein is Valine--tRNA ligase.